The chain runs to 131 residues: DNA-directed RNA polymerase subunit Rpo8 (131 aa).

Belongs to the archaeal Rpo8 RNA polymerase subunit family. As to quaternary structure, part of the 13-subunit RNA polymerase complex. Interacts with Rpo1N on the periphery of the clamp head.

It localises to the cytoplasm. The catalysed reaction is RNA(n) + a ribonucleoside 5'-triphosphate = RNA(n+1) + diphosphate. Its function is as follows. DNA-dependent RNA polymerase (RNAP) catalyzes the transcription of DNA into RNA using the four ribonucleoside triphosphates as substrates. In Saccharolobus shibatae (strain ATCC 51178 / DSM 5389 / JCM 8931 / NBRC 15437 / B12) (Sulfolobus shibatae), this protein is DNA-directed RNA polymerase subunit Rpo8.